The following is a 220-amino-acid chain: MHIMEGFLPGIWALVWFVVAIPVISYGALKTARLARNDELNKSHIAVAAAFIFVLSALKIPSVTGSTSHPTGTGIAVVLFGPAVTAFLSAIVLLYQALLLGHGGLTTLGANVVSMGVVGPVAGWVVFRALNPYLDLQKATFAAAVIADWTTYLVTSIQLGVAFPSGPGVAGVVDSIVRFASVFSITQIPIGIVEGALAAGLIGYIAMSRQSIKTRLGVTA.

Transmembrane regions (helical) follow at residues 6–26 (GFLP…VISY), 45–65 (IAVA…SVTG), 74–94 (GIAV…IVLL), 107–127 (TLGA…WVVF), 153–173 (LVTS…AGVV), and 188–208 (IPIG…IAMS).

It belongs to the CbiM family. In terms of assembly, forms an energy-coupling factor (ECF) transporter complex composed of an ATP-binding protein (A component, CbiO), a transmembrane protein (T component, CbiQ) and 2 possible substrate-capture proteins (S components, CbiM and CbiN) of unknown stoichimetry.

It is found in the cell membrane. Its pathway is cofactor biosynthesis; adenosylcobalamin biosynthesis. In terms of biological role, part of the energy-coupling factor (ECF) transporter complex CbiMNOQ involved in cobalt import. The chain is Putative cobalt transport protein CbiM from Halobacterium salinarum (strain ATCC 29341 / DSM 671 / R1).